Consider the following 256-residue polypeptide: Late embryogenesis abundant protein 32 (256 aa).

Residues 1 to 14 (MSQEQPRRPREPVK) are compositionally biased toward basic and acidic residues. Residues 1–20 (MSQEQPRRPREPVKYGDVFE) are disordered. A Nuclear localization signal (NLS) motif is present at residues 5-9 (QPRRP). 3 SMP domains span residues 13–66 (VKYG…TTNI), 130–187 (ITIG…HNAT), and 195–253 (IKLR…LNER).

It belongs to the LEA type SMP family. Embryo specific, only in dry mature seeds. Expressed at low levels.

It localises to the cytoplasm. The protein resides in the nucleus. LEA proteins are late embryonic proteins abundant in higher plant seed embryos. The function of those proteins is not known. This is Late embryogenesis abundant protein 32 from Arabidopsis thaliana (Mouse-ear cress).